The chain runs to 268 residues: Small ribosomal subunit protein uS2 (268 aa).

This sequence belongs to the universal ribosomal protein uS2 family.

The polypeptide is Small ribosomal subunit protein uS2 (Caulobacter vibrioides (strain ATCC 19089 / CIP 103742 / CB 15) (Caulobacter crescentus)).